The sequence spans 66 residues: DNA gyrase inhibitor YacG (66 aa).

Zn(2+)-binding residues include C9, C12, C28, and C32. A disordered region spans residues 45-66; that stretch reads HKIAGAEESEDELYSGDLEPRH.

Belongs to the DNA gyrase inhibitor YacG family. Interacts with GyrB. Zn(2+) is required as a cofactor.

Functionally, inhibits all the catalytic activities of DNA gyrase by preventing its interaction with DNA. Acts by binding directly to the C-terminal domain of GyrB, which probably disrupts DNA binding by the gyrase. This chain is DNA gyrase inhibitor YacG, found in Pseudomonas entomophila (strain L48).